Consider the following 265-residue polypeptide: 5'-nucleotidase SurE (265 aa).

A divalent metal cation contacts are provided by Asp8, Asp9, Ser40, and Asn98.

This sequence belongs to the SurE nucleotidase family. A divalent metal cation serves as cofactor.

Its subcellular location is the cytoplasm. The catalysed reaction is a ribonucleoside 5'-phosphate + H2O = a ribonucleoside + phosphate. Nucleotidase that shows phosphatase activity on nucleoside 5'-monophosphates. This Trichormus variabilis (strain ATCC 29413 / PCC 7937) (Anabaena variabilis) protein is 5'-nucleotidase SurE.